Here is a 58-residue protein sequence, read N- to C-terminus: Large ribosomal subunit protein uL30 (58 aa).

The protein belongs to the universal ribosomal protein uL30 family. As to quaternary structure, part of the 50S ribosomal subunit.

The polypeptide is Large ribosomal subunit protein uL30 (Novosphingobium aromaticivorans (strain ATCC 700278 / DSM 12444 / CCUG 56034 / CIP 105152 / NBRC 16084 / F199)).